The chain runs to 114 residues: Ig kappa chain V-I region S107A (114 aa).

The tract at residues 1–23 (DIVMTQSPTFLAVTASKKVTISC) is framework-1. Cys-23 and Cys-94 are oxidised to a cystine. Residues 24–40 (TASESLYSSKHKVHYLA) are complementarity-determining-1. The framework-2 stretch occupies residues 41-55 (WYQKKPEQSPKLLIY). The interval 56–62 (GASNRYI) is complementarity-determining-2. Residues 63–94 (GVPDRFTGSGSGTDFTLTISSVQVEDLTHYYC) are framework-3. The tract at residues 95–103 (AQFYSYPLT) is complementarity-determining-3. Positions 104 to 113 (FGAGTKLELK) are framework-4.

In terms of biological role, anti-phosphocholine antibody. The chain is Ig kappa chain V-I region S107A (Igkv7-33) from Mus musculus (Mouse).